Consider the following 128-residue polypeptide: Putative esterase aq_1494 (128 aa).

D15 is an active-site residue.

The protein belongs to the 4-hydroxybenzoyl-CoA thioesterase family.

This Aquifex aeolicus (strain VF5) protein is Putative esterase aq_1494.